The primary structure comprises 1140 residues: MNQLNQKTKLDKHLSSDNRAKIVADYFKTNGLVKHQIETFNHFISKGLKTIINNESSIKYQSHDNYSLKFTNIYVEYPSIIDDDRTIRDLYPQEARNKDLSYTGNVCVNVIEMVENKEGKPPQISEQYRVPIAKIPIMLGSDVCHLSKYTPLENEQINGHSQADQGGYFIINGKERVLISQVRKAYNKPVCFVKSTSQKEDVLICEMRSMCEETFHSTSVQVKMIKNKIMVSLKLKRKLIDIPVGIVFKCLGYNPDQMGSKFRSLFNLPPEYEKYIDAIKNDCLEEFAYGIAVSAADGDNSDSGGESGGEEEADQEEHIVKVFRNMSTSVDKDGGMAATGITIEDVQKSLDMDLFPHLGITSTRKQRVDLLAFMVKKYLLTLTRKIPVDNRDDYNHKRVETAGELYSFLFRLLYKKFQKTCITQIRNRKPDISNFLRTSGITTGILYSFSSGYWGVQRNTYIRTGVSQVVNPKVSLLANYSSLRRVVIPESKDGKEAKTSEIRQIHPSSSFLVCPVETPEGKGVGTVLNMAVFCQVTTGISTCEIMDQIDSFGVDLKCHCTIKDPNNCLLLLINGSPYGNGHANVIHRLNFLNDTNISIVVNRALGVIEIFSDAGRFIRPIFDLDKICNFEGEIVPSFKWFLDNQLIRYIDINEAAANSIAIELRDLSTNPNTRYNLMELDPCGMFGIVAGIIPFPDRTQSARNCFYSSMVKQAIGFVPCHNLKTETVSHTLNYPQKPLVTTSFAEYNQLNEYPNGINAIVAIACYTGYNQEDSIILNKSSIDRGLFGTITYNTFTAQEKKNGIIEERIEIPSNAIKIRDCNYGLVGPDGIVRLRQRVKKGDVLICKVTIKNKNQDEKLVDSSVIVQHGEEGYVDRIVDNVIDGCRIVKVVIGQMRTPEIGDKFCSGMAQKGTCGMIFPQEDMPFTASGMTPDIIINPNCIPSRMTINQIISTVMGKLYTVNPNPRFRNGNSFQENSNTILKELCHHLKLNGFDPSGSEVMYSGFTGERIQSTIFMGPTYYHRLKHMVKDKMHARSHGQVTTLHRQPNCGRSQGGGLRFGEMEKDCILVHGATQFLNERMFLNSDPFQIDVCKDCGMMSSTSKKCHHCGSINVKRCNIPYSCKNLLQELNGMGIKTKIDL.

Aspartate 773 is a binding site for Mg(2+). 4 residues coordinate Zn(2+): cysteine 1092, cysteine 1095, cysteine 1105, and cysteine 1108. The segment at 1092 to 1108 (CKDCGMMSSTSKKCHHC) adopts a C4-type zinc-finger fold.

This sequence belongs to the RNA polymerase beta chain family.

The enzyme catalyses RNA(n) + a ribonucleoside 5'-triphosphate = RNA(n+1) + diphosphate. In terms of biological role, component of the DNA-dependent RNA polymerase that catalyzes the transcription of DNA into RNA using the four ribonucleoside triphosphates as substrates. Second largest component of RNA polymerase II which synthesizes mRNA precursors and many functional non-coding RNAs. Proposed to contribute to the polymerase catalytic activity and forms the polymerase active center together with the largest subunit. The sequence is that of Probable DNA-directed RNA polymerase II subunit RPB2 homolog from Invertebrate iridescent virus 3 (IIV-3).